A 343-amino-acid chain; its full sequence is Flavone 3'-O-methyltransferase OMT2 (343 aa).

Residue N107 coordinates (E)-ferulate. 6 residues coordinate S-adenosyl-L-homocysteine: G184, D207, D227, M228, M240, and K241. The Proton acceptor role is filled by H245. D246 serves as a coordination point for (E)-5-hydroxyferulate. Active-site residues include E273 and E305.

It belongs to the class I-like SAM-binding methyltransferase superfamily. Cation-independent O-methyltransferase family. COMT subfamily. As to quaternary structure, homodimer.

The enzyme catalyses (E)-5-hydroxyferulate + S-adenosyl-L-methionine = (E)-sinapate + S-adenosyl-L-homocysteine + H(+). It catalyses the reaction luteolin + S-adenosyl-L-methionine = chrysoeriol + S-adenosyl-L-homocysteine + H(+). The catalysed reaction is quercetin + S-adenosyl-L-methionine = isorhamnetin + S-adenosyl-L-homocysteine + H(+). It carries out the reaction (E)-caffeate + S-adenosyl-L-methionine = (E)-ferulate + S-adenosyl-L-homocysteine + H(+). The enzyme catalyses a 3'-hydroxyflavone + S-adenosyl-L-methionine = a 3'-methoxyflavone + S-adenosyl-L-homocysteine + H(+). It participates in flavonoid metabolism. Catalyzes the 3'-O-methylation of the flavonoids luteolin and quercetin. Catalyzes the 3- of 5-O-methylation of the phenylpropanoids caffeate and 5-hydroxyferulate. Substrate preference is 5-hydroxyferulate &gt; luteolin &gt; quercetin &gt; caffeate. Apigenin, kempferol and 3,4-dimethylquercetin do not seem to be substrates for methylation. The chain is Flavone 3'-O-methyltransferase OMT2 from Chrysosplenium americanum (American golden saxifrage).